The chain runs to 211 residues: Ras-related protein Rab-38 (211 aa).

GTP is bound by residues Gly-19, Val-20, Gly-21, Lys-22, Thr-23, Ser-24, Ser-35, Ser-36, Tyr-38, and Thr-41. Thr-23 contacts Mg(2+). A Switch 1 motif is present at residues 32-46 (QNFSSHYRATIGVDF). 2 residues coordinate Mg(2+): Thr-41 and Asp-65. Positions 68, 128, 130, 160, and 161 each coordinate GTP. A Switch 2 motif is present at residues 68–81 (GQERFGNMTRVYYR). Cys-205 carries the S-palmitoyl cysteine lipid modification. Residue Cys-208 is the site of S-geranylgeranyl cysteine attachment.

Belongs to the small GTPase superfamily. Rab family. Interacts with ANKRD27. The cofactor is Mg(2+).

It localises to the cell membrane. It is found in the cytoplasmic vesicle. Its subcellular location is the phagosome. The protein localises to the phagosome membrane. The protein resides in the melanosome. It localises to the melanosome membrane. The enzyme catalyses GTP + H2O = GDP + phosphate + H(+). With respect to regulation, regulated by guanine nucleotide exchange factors (GEFs) including the BLOC-3 complex composed of HPS1 and HPS4 which promote the exchange of bound GDP for free GTP. Regulated by GTPase activating proteins (GAPs) including SGSM2 which increase the GTP hydrolysis activity. Inhibited by GDP dissociation inhibitors (GDIs). The small GTPases Rab are key regulators of intracellular membrane trafficking, from the formation of transport vesicles to their fusion with membranes. Rabs cycle between an inactive GDP-bound form and an active GTP-bound form that is able to recruit to membranes different sets of downstream effectors directly responsible for vesicle formation, movement, tethering and fusion. RAB38 plays a role in the maturation of phagosomes that engulf pathogens, such as S.aureus and Mycobacterium. May be involved in melanosomal transport and docking. Involved in the proper sorting of TYRP1. Involved in peripheral melanosomal distribution of TYRP1 in melanocytes; the function, which probably is implicating vesicle-trafficking, includes cooperation with ANKRD27 and VAMP7. Plays an important role in the control of melanin production and melanosome biogenesis. In concert with RAB32, regulates the proper trafficking of melanogenic enzymes TYR, TYRP1 and DCT/TYRP2 to melanosomes in melanocytes. This is Ras-related protein Rab-38 from Mus musculus (Mouse).